We begin with the raw amino-acid sequence, 506 residues long: ATP synthase subunit alpha (506 aa).

Gly170–Thr177 is a binding site for ATP.

Belongs to the ATPase alpha/beta chains family. In terms of assembly, F-type ATPases have 2 components, CF(1) - the catalytic core - and CF(0) - the membrane proton channel. CF(1) has five subunits: alpha(3), beta(3), gamma(1), delta(1), epsilon(1). CF(0) has four main subunits: a(1), b(1), b'(1) and c(9-12).

The protein localises to the cellular thylakoid membrane. It catalyses the reaction ATP + H2O + 4 H(+)(in) = ADP + phosphate + 5 H(+)(out). In terms of biological role, produces ATP from ADP in the presence of a proton gradient across the membrane. The alpha chain is a regulatory subunit. This Synechococcus sp. (strain JA-2-3B'a(2-13)) (Cyanobacteria bacterium Yellowstone B-Prime) protein is ATP synthase subunit alpha.